A 949-amino-acid polypeptide reads, in one-letter code: Translation initiation factor IF-2 (949 aa).

Disordered regions lie at residues 46 to 82 (LTASRPAESGPEEVRVTTNIVRRRSRPSAAAEPEAEA), 145 to 176 (EPAVAQEASPAVTAAKPVPATPAAPPQPERAS), and 188 to 361 (IPIT…KTEL). Low complexity predominate over residues 152–162 (ASPAVTAAKPV). The segment covering 163–172 (PATPAAPPQP) has biased composition (pro residues). Residues 263-276 (PRDAAAPRPAGARP) show a composition bias toward low complexity. A compositionally biased stretch (basic and acidic residues) spans 334–344 (SREERQFDPFH). Positions 449–618 (ERPPVVTIMG…LLQADLMDLK (170 aa)) constitute a tr-type G domain. The interval 458-465 (GHVDHGKT) is G1. GTP is bound at residue 458–465 (GHVDHGKT). Residues 483 to 487 (GITQH) are G2. The segment at 504 to 507 (DTPG) is G3. GTP is bound by residues 504-508 (DTPGH) and 558-561 (NKID). The tract at residues 558–561 (NKID) is G4. The interval 594–596 (SAK) is G5.

Belongs to the TRAFAC class translation factor GTPase superfamily. Classic translation factor GTPase family. IF-2 subfamily.

The protein resides in the cytoplasm. Functionally, one of the essential components for the initiation of protein synthesis. Protects formylmethionyl-tRNA from spontaneous hydrolysis and promotes its binding to the 30S ribosomal subunits. Also involved in the hydrolysis of GTP during the formation of the 70S ribosomal complex. This is Translation initiation factor IF-2 from Trichlorobacter lovleyi (strain ATCC BAA-1151 / DSM 17278 / SZ) (Geobacter lovleyi).